The following is a 121-amino-acid chain: Large ribosomal subunit protein uL14 (121 aa).

Belongs to the universal ribosomal protein uL14 family. In terms of assembly, part of the 50S ribosomal subunit. Forms a cluster with proteins L3 and L19. In the 70S ribosome, L14 and L19 interact and together make contacts with the 16S rRNA in bridges B5 and B8.

Functionally, binds to 23S rRNA. Forms part of two intersubunit bridges in the 70S ribosome. This chain is Large ribosomal subunit protein uL14, found in Prochlorococcus marinus (strain NATL1A).